A 522-amino-acid chain; its full sequence is Type-2 serine--tRNA ligase (522 aa).

Ala-319 is an L-serine binding site. Cys-321 contributes to the Zn(2+) binding site. An L-serine-binding site is contributed by Arg-350. Residues 350–352 (RWE) and 361–362 (RV) each bind ATP. 367 to 369 (RIE) lines the L-serine pocket. Zn(2+)-binding residues include Glu-369 and Cys-476. An ATP-binding site is contributed by Arg-483.

Belongs to the class-II aminoacyl-tRNA synthetase family. Type-2 seryl-tRNA synthetase subfamily. Homodimer. The cofactor is Zn(2+).

The protein localises to the cytoplasm. It catalyses the reaction tRNA(Ser) + L-serine + ATP = L-seryl-tRNA(Ser) + AMP + diphosphate + H(+). The enzyme catalyses tRNA(Sec) + L-serine + ATP = L-seryl-tRNA(Sec) + AMP + diphosphate + H(+). It participates in aminoacyl-tRNA biosynthesis; selenocysteinyl-tRNA(Sec) biosynthesis; L-seryl-tRNA(Sec) from L-serine and tRNA(Sec): step 1/1. Catalyzes the attachment of serine to tRNA(Ser). Is also able to aminoacylate tRNA(Sec) with serine, to form the misacylated tRNA L-seryl-tRNA(Sec), which will be further converted into selenocysteinyl-tRNA(Sec). This chain is Type-2 serine--tRNA ligase (serS), found in Methanococcus aeolicus (strain ATCC BAA-1280 / DSM 17508 / OCM 812 / Nankai-3).